The primary structure comprises 493 residues: MTEAKGDIGLIGLAVMGENLVLNMESRGFTCSVYNRTTSKVDEFVQGRGKGKKFIGCHSLETLVQSLKTPRRVMLMVKAGEVVDHFIQLLLPLLEKGDIIIDGGNSLYTDSDRRTKDLDAKGILFIGTGVSGGEEGALLGPSIMPGGNPKAWEHVKPIFQAISAKVQPGDQPCCDWVGDGGAGHYVKMVHNGIEYGDMQLISEAYFILKHYLGLSNDELQKTFAKWNTGDLDSYLIEITADIFAKKCEKDPNTYVVDTILDSAGQKGTGKWTAINALDVGIPLTLVAESVFARCVSSFKEERVKASTILAGPNPNEANKKFTGDKEQVIEAVRQALFASKLVSYAQGFTMMKAAAKEYKWNLNYGNIALLWRGGCIIRSTFLGEIKGAFDKNPQLDNLLTDCWFRDKLAAAQDGWRQVASISVLHGIPTPAFTSALSYYDSYRCAKLSANLVQAQRDYFGAHTFQLLDDPKGAPVHVNWTGRGGSTHSTTYSI.

Residues 12–17, 35–37, 77–79, and Asn-105 contribute to the NADP(+) site; these read GLAVMG, NRT, and VKA. Substrate-binding positions include Asn-105 and 131–133; that span reads SGG. Lys-187 serves as the catalytic Proton acceptor. Residue 190 to 191 participates in substrate binding; the sequence is HN. Glu-194 (proton donor) is an active-site residue. Substrate is bound by residues Tyr-195, Lys-266, Arg-293, Arg-456, and His-462.

It belongs to the 6-phosphogluconate dehydrogenase family. Homodimer.

It catalyses the reaction 6-phospho-D-gluconate + NADP(+) = D-ribulose 5-phosphate + CO2 + NADPH. It participates in carbohydrate degradation; pentose phosphate pathway; D-ribulose 5-phosphate from D-glucose 6-phosphate (oxidative stage): step 3/3. Functionally, catalyzes the oxidative decarboxylation of 6-phosphogluconate to ribulose 5-phosphate and CO(2), with concomitant reduction of NADP to NADPH. In Dictyostelium discoideum (Social amoeba), this protein is 6-phosphogluconate dehydrogenase, decarboxylating (gnd).